A 350-amino-acid chain; its full sequence is MSDAVQTGWQLSEQAPLRTLNTFHVEATARWLLNVQAPEALPQALAAPEIAGQPLLVLGSGSNVLLAGDPPGCVLCFDNRETSIIAHRADHAIVRAGAGVNWHALVLYALQQGLSGLENLALIPGTVGACPIQNIGAYGAQVGDFIHVVEAFDRHSQQFVRLDAADCAFGYRDSVFKQQPERYLIVAVEFNLPLLHELRLDYAGIREELASMGAELAGAADVAQAVINIRRRKLPDPDVLGNAGSFFKNPLLPSEQIAALQASFADMPVYPGEHAGQGKLSAAWLIEQCGWKGKREGDAGVSPDHALVLVNYGTATGAQLLDFARRIAESVRERYSVILEPEPRIIGAHW.

Residues 24-195 (HVEATARWLL…VAVEFNLPLL (172 aa)) form the FAD-binding PCMH-type domain. Arg172 is an active-site residue. Residue Ser245 is the Proton donor of the active site. Glu342 is a catalytic residue.

This sequence belongs to the MurB family. FAD is required as a cofactor.

It localises to the cytoplasm. It catalyses the reaction UDP-N-acetyl-alpha-D-muramate + NADP(+) = UDP-N-acetyl-3-O-(1-carboxyvinyl)-alpha-D-glucosamine + NADPH + H(+). Its pathway is cell wall biogenesis; peptidoglycan biosynthesis. Its function is as follows. Cell wall formation. The polypeptide is UDP-N-acetylenolpyruvoylglucosamine reductase (Xanthomonas axonopodis pv. citri (strain 306)).